The sequence spans 167 residues: MSLVALYTGSFDPLTLGHMDVIGNAAVLCDEVIVAIGVNPSKTPLFTAQERITLIESACGPLFASHACKLSVRLFSGLAVEAAREAGAQLLVRGLRDGSDLDFEMQMASMNRVMAPDIQTIFFPAAPAVRHITATLVRQVATMGGDASPFVPPVVAAALAQKTSLPS.

Serine 10 provides a ligand contact to substrate. Residues 10-11 (SF) and histidine 18 each bind ATP. Residues lysine 42, alanine 79, and arginine 93 each contribute to the substrate site. ATP is bound by residues 94-96 (GLR), glutamate 104, and 129-135 (VRHITAT).

Belongs to the bacterial CoaD family. As to quaternary structure, homohexamer. Requires Mg(2+) as cofactor.

It localises to the cytoplasm. It carries out the reaction (R)-4'-phosphopantetheine + ATP + H(+) = 3'-dephospho-CoA + diphosphate. The protein operates within cofactor biosynthesis; coenzyme A biosynthesis; CoA from (R)-pantothenate: step 4/5. In terms of biological role, reversibly transfers an adenylyl group from ATP to 4'-phosphopantetheine, yielding dephospho-CoA (dPCoA) and pyrophosphate. This Beijerinckia indica subsp. indica (strain ATCC 9039 / DSM 1715 / NCIMB 8712) protein is Phosphopantetheine adenylyltransferase.